A 340-amino-acid chain; its full sequence is PI-PLC X domain-containing protein 2 (340 aa).

The PI-PLC X-box domain maps to 42–215; it reads HLHNVPLSNL…KYQVLIFYHC (174 aa). Catalysis depends on residues histidine 57 and histidine 132.

As to expression, expressed at highest levels in brain, followed by stomach and small intestine. Detected at low levels in kidney, ey, thymus and slkeletal muscle.

It localises to the nucleus. It carries out the reaction a 1,2-diacyl-sn-glycero-3-phospho-(1D-myo-inositol) + H2O = 1D-myo-inositol 1-phosphate + a 1,2-diacyl-sn-glycerol + H(+). In terms of biological role, catalyzes the hydrolysis of inositol from phosphatidylinositol (1,2-diacyl-sn-glycero-3-phospho-(1D-myo-inositol), PI). Could also hydrolyze various multi-phosphorylated derivatives of PI, such as phosphatidylinositol-4,5 bisphosphate (PIP2), releasing inositol-1,4,5-trisphosphate (IP3) and the protein kinase C activator diacylglycerol (DAG), therefore mediating cell signaling. This chain is PI-PLC X domain-containing protein 2 (Plcxd2), found in Mus musculus (Mouse).